A 383-amino-acid chain; its full sequence is S-adenosylmethionine synthase (383 aa).

ATP is bound at residue His-15. Asp-17 lines the Mg(2+) pocket. Glu-43 lines the K(+) pocket. Residues Glu-56 and Gln-99 each contribute to the L-methionine site. The interval 99–109 (QSPDINQGVDR) is flexible loop. ATP-binding positions include 164–166 (DAK), 230–231 (RF), Asp-239, 245–246 (RK), Ala-262, and Lys-266. Asp-239 provides a ligand contact to L-methionine. Lys-270 contacts L-methionine.

It belongs to the AdoMet synthase family. Homotetramer; dimer of dimers. The cofactor is Mg(2+). Requires K(+) as cofactor.

It is found in the cytoplasm. The enzyme catalyses L-methionine + ATP + H2O = S-adenosyl-L-methionine + phosphate + diphosphate. Its pathway is amino-acid biosynthesis; S-adenosyl-L-methionine biosynthesis; S-adenosyl-L-methionine from L-methionine: step 1/1. In terms of biological role, catalyzes the formation of S-adenosylmethionine (AdoMet) from methionine and ATP. The overall synthetic reaction is composed of two sequential steps, AdoMet formation and the subsequent tripolyphosphate hydrolysis which occurs prior to release of AdoMet from the enzyme. In Shewanella putrefaciens (strain CN-32 / ATCC BAA-453), this protein is S-adenosylmethionine synthase.